The following is a 223-amino-acid chain: Ribose-5-phosphate isomerase A (223 aa).

Residues 26–29, 82–85, and 95–98 each bind substrate; these read TGST, DGAD, and KGGG. Glu104 (proton acceptor) is an active-site residue. Lys122 lines the substrate pocket.

It belongs to the ribose 5-phosphate isomerase family. In terms of assembly, homodimer.

It catalyses the reaction aldehydo-D-ribose 5-phosphate = D-ribulose 5-phosphate. It participates in carbohydrate degradation; pentose phosphate pathway; D-ribose 5-phosphate from D-ribulose 5-phosphate (non-oxidative stage): step 1/1. Its function is as follows. Catalyzes the reversible conversion of ribose-5-phosphate to ribulose 5-phosphate. The polypeptide is Ribose-5-phosphate isomerase A (Streptococcus agalactiae serotype Ia (strain ATCC 27591 / A909 / CDC SS700)).